The chain runs to 60 residues: Large ribosomal subunit protein bL32 (60 aa).

Over residues 1-16 the composition is skewed to basic residues; it reads MAVPKKKTSKSRKNMR. The interval 1–20 is disordered; that stretch reads MAVPKKKTSKSRKNMRRAHD.

The protein belongs to the bacterial ribosomal protein bL32 family.

The chain is Large ribosomal subunit protein bL32 from Geobacter metallireducens (strain ATCC 53774 / DSM 7210 / GS-15).